A 451-amino-acid chain; its full sequence is Tubulin alpha-1A chain (451 aa).

Positions 1 to 4 (MREC) match the MREC motif motif. Residues Gln11, Glu71, Ser140, Gly144, Thr145, Thr179, Asn206, and Asn228 each contribute to the GTP site. Position 71 (Glu71) interacts with Mg(2+). Residue Glu254 is part of the active site. The disordered stretch occupies residues 432-451 (YEEVGVDSVEGEGEEEGEEY). A 5-glutamyl polyglutamate modification is found at Glu445.

The protein belongs to the tubulin family. Dimer of alpha and beta chains. A typical microtubule is a hollow water-filled tube with an outer diameter of 25 nm and an inner diameter of 15 nM. Alpha-beta heterodimers associate head-to-tail to form protofilaments running lengthwise along the microtubule wall with the beta-tubulin subunit facing the microtubule plus end conferring a structural polarity. Microtubules usually have 13 protofilaments but different protofilament numbers can be found in some organisms and specialized cells. Mg(2+) is required as a cofactor. Some glutamate residues at the C-terminus are polyglycylated, resulting in polyglycine chains on the gamma-carboxyl group. Glycylation is mainly limited to tubulin incorporated into axonemes (cilia and flagella) whereas glutamylation is prevalent in neuronal cells, centrioles, axonemes, and the mitotic spindle. Both modifications can coexist on the same protein on adjacent residues, and lowering polyglycylation levels increases polyglutamylation, and reciprocally. The precise function of polyglycylation is still unclear. Post-translationally, some glutamate residues at the C-terminus are polyglutamylated, resulting in polyglutamate chains on the gamma-carboxyl group. Polyglutamylation plays a key role in microtubule severing by spastin (SPAST). SPAST preferentially recognizes and acts on microtubules decorated with short polyglutamate tails: severing activity by SPAST increases as the number of glutamates per tubulin rises from one to eight, but decreases beyond this glutamylation threshold. In terms of processing, undergoes a tyrosination/detyrosination cycle, the cyclic removal and re-addition of a C-terminal tyrosine residue by the enzymes tubulin tyrosine carboxypeptidase (MATCAP1, VASH1 or VASH2) and tubulin tyrosine ligase (TTL), respectively. Tyrosination promotes microtubule interaction with CAP-Gly microtubule plus-end tracking proteins. Tyrosinated tubulins regulate the initiation of dynein-driven motility. Post-translationally, detyrosination is involved in metaphase plate congression by guiding chromosomes during mitosis. Detyrosination increases microtubules-dependent mechanotransduction in dystrophic cardiac and skeletal muscle. In cardiomyocytes, detyrosinated microtubules are required to resist to contractile compression during contraction.

The protein localises to the cytoplasm. The protein resides in the cytoskeleton. It catalyses the reaction GTP + H2O = GDP + phosphate + H(+). In terms of biological role, tubulin is the major constituent of microtubules, a cylinder consisting of laterally associated linear protofilaments composed of alpha- and beta-tubulin heterodimers. Microtubules grow by the addition of GTP-tubulin dimers to the microtubule end, where a stabilizing cap forms. Below the cap, tubulin dimers are in GDP-bound state, owing to GTPase activity of alpha-tubulin. The chain is Tubulin alpha-1A chain (TUBA1A) from Gallus gallus (Chicken).